The sequence spans 81 residues: ATP synthase subunit c, chloroplastic (81 aa).

The next 2 membrane-spanning stretches (helical) occupy residues 3-23 (PLVFAASVIAAGLAVGLASIG) and 57-77 (LAFMEALTIYGLVVALALLFA).

Belongs to the ATPase C chain family. In terms of assembly, F-type ATPases have 2 components, F(1) - the catalytic core - and F(0) - the membrane proton channel. F(1) has five subunits: alpha(3), beta(3), gamma(1), delta(1), epsilon(1). F(0) has four main subunits: a(1), b(1), b'(1) and c(10-14). The alpha and beta chains form an alternating ring which encloses part of the gamma chain. F(1) is attached to F(0) by a central stalk formed by the gamma and epsilon chains, while a peripheral stalk is formed by the delta, b and b' chains.

The protein localises to the plastid. Its subcellular location is the chloroplast thylakoid membrane. In terms of biological role, f(1)F(0) ATP synthase produces ATP from ADP in the presence of a proton or sodium gradient. F-type ATPases consist of two structural domains, F(1) containing the extramembraneous catalytic core and F(0) containing the membrane proton channel, linked together by a central stalk and a peripheral stalk. During catalysis, ATP synthesis in the catalytic domain of F(1) is coupled via a rotary mechanism of the central stalk subunits to proton translocation. Key component of the F(0) channel; it plays a direct role in translocation across the membrane. A homomeric c-ring of between 10-14 subunits forms the central stalk rotor element with the F(1) delta and epsilon subunits. This Atropa belladonna (Belladonna) protein is ATP synthase subunit c, chloroplastic.